Reading from the N-terminus, the 32-residue chain is Cruzioseptin-9 (32 aa).

Glutamine 29 is modified (glutamine amide). A propeptide spanning residues 31 to 32 is cleaved from the precursor; that stretch reads EQ.

Expressed by the skin glands.

The protein resides in the secreted. Has antimicrobial activity. The chain is Cruzioseptin-9 from Cruziohyla calcarifer (Splendid leaf frog).